A 684-amino-acid chain; its full sequence is Cleavage and polyadenylation specificity factor 73 (684 aa).

The Zn(2+) site is built by histidine 77, histidine 79, aspartate 81, histidine 82, histidine 164, and aspartate 185. Histidine 402 functions as the Proton donor in the catalytic mechanism. Residue histidine 424 participates in Zn(2+) binding.

Belongs to the metallo-beta-lactamase superfamily. RNA-metabolizing metallo-beta-lactamase-like family. CPSF3 subfamily. Component of the cleavage and polyadenylation specificity factor (CPSF) complex, composed of at least Clp, Cpsf73, Cpsf100 and Cpsf160. Interacts with Sym and Cpsf100 forming a core cleavage factor required for both polyadenylated and histone mRNA processing. Interacts with Slbp and Lsm11. The cofactor is Zn(2+).

The protein resides in the nucleus. Component of the cleavage and polyadenylation specificity factor (CPSF) complex that plays a key role in pre-mRNA 3'-end formation, recognizing the AAUAAA signal sequence and interacting with poly(A) polymerase and other factors to bring about cleavage and poly(A) addition. Has endonuclease activity and functions as an mRNA 3'-end-processing endonuclease. Required for the cotranscriptional processing of 3'-ends of polyadenylated and histone pre-mRNA. The protein is Cleavage and polyadenylation specificity factor 73 (Cpsf73) of Drosophila melanogaster (Fruit fly).